The sequence spans 323 residues: Cell division protein ZipA (323 aa).

Residues 1 to 5 are Periplasmic-facing; the sequence is MQELR. The chain crosses the membrane as a helical span at residues 6 to 26; that stretch reads FVLIVVGALAIAALLFHGLWT. Topologically, residues 27–323 are cytoplasmic; the sequence is SKKEGKAKFG…QIVEFNAANA (297 aa). The interval 35 to 92 is disordered; the sequence is FGNKPLGKLDVDQEDKDTPGQERDFAPDPEDDFEIIRKDRKEPDFGMENSFDNKFSSD. Basic and acidic residues-rich tracts occupy residues 41–60 and 68–78; these read GKLD…RDFA and EIIRKDRKEPD.

The protein belongs to the ZipA family. In terms of assembly, interacts with FtsZ via their C-terminal domains.

The protein localises to the cell inner membrane. Functionally, essential cell division protein that stabilizes the FtsZ protofilaments by cross-linking them and that serves as a cytoplasmic membrane anchor for the Z ring. Also required for the recruitment to the septal ring of downstream cell division proteins. The polypeptide is Cell division protein ZipA (Vibrio campbellii (strain ATCC BAA-1116)).